We begin with the raw amino-acid sequence, 235 residues long: Uridylate kinase (235 aa).

Position 8 to 11 (8 to 11) interacts with ATP; it reads KFSG. The segment at 16–21 is involved in allosteric activation by GTP; that stretch reads GKEGYG. Glycine 50 provides a ligand contact to UMP. Glycine 51 and arginine 55 together coordinate ATP. UMP contacts are provided by residues aspartate 71 and 132-139; that span reads TGNPYFTT. ATP is bound by residues threonine 159, tyrosine 165, and aspartate 168.

This sequence belongs to the UMP kinase family. Homohexamer.

The protein localises to the cytoplasm. It catalyses the reaction UMP + ATP = UDP + ADP. It participates in pyrimidine metabolism; CTP biosynthesis via de novo pathway; UDP from UMP (UMPK route): step 1/1. With respect to regulation, allosterically activated by GTP. Inhibited by UTP. Its function is as follows. Catalyzes the reversible phosphorylation of UMP to UDP. In Sulfurovum sp. (strain NBC37-1), this protein is Uridylate kinase.